A 113-amino-acid polypeptide reads, in one-letter code: Dolichyl-diphosphooligosaccharide--protein glycosyltransferase subunit DAD1 (113 aa).

The residue at position 2 (Ser-2) is an N-acetylserine. Residues 2-30 (SASVVSVISRFLEEYLSSTPQRLKLLDAY) are Cytoplasmic-facing. A helical membrane pass occupies residues 31–51 (LLYILLTGALQFGYCLLVGTF). Position 52 (Pro-52) is a topological domain, lumenal. A helical membrane pass occupies residues 53 to 73 (FNSFLSGFISCVGSFILAVCL). Topologically, residues 74 to 92 (RIQINPQNKADFQGISPER) are cytoplasmic. The helical transmembrane segment at 93–113 (AFADFLFASTILHLVVMNFVG) threads the bilayer.

The protein belongs to the DAD/OST2 family. As to quaternary structure, component of the oligosaccharyltransferase (OST) complex. OST exists in two different complex forms which contain common core subunits RPN1, RPN2, OST48, OST4, DAD1 and TMEM258, either STT3A or STT3B as catalytic subunits, and form-specific accessory subunits. STT3A complex assembly occurs through the formation of 3 subcomplexes. Subcomplex 1 contains RPN1 and TMEM258, subcomplex 2 contains the STT3A-specific subunits STT3A, DC2/OSTC, and KCP2 as well as the core subunit OST4, and subcomplex 3 contains RPN2, DAD1, and OST48. The STT3A complex can form stable complexes with the Sec61 complex or with both the Sec61 and TRAP complexes.

It localises to the endoplasmic reticulum membrane. Its pathway is protein modification; protein glycosylation. Subunit of the oligosaccharyl transferase (OST) complex that catalyzes the initial transfer of a defined glycan (Glc(3)Man(9)GlcNAc(2) in eukaryotes) from the lipid carrier dolichol-pyrophosphate to an asparagine residue within an Asn-X-Ser/Thr consensus motif in nascent polypeptide chains, the first step in protein N-glycosylation. N-glycosylation occurs cotranslationally and the complex associates with the Sec61 complex at the channel-forming translocon complex that mediates protein translocation across the endoplasmic reticulum (ER). All subunits are required for a maximal enzyme activity. The polypeptide is Dolichyl-diphosphooligosaccharide--protein glycosyltransferase subunit DAD1 (Mus musculus (Mouse)).